Consider the following 239-residue polypeptide: Pyridoxine 5'-phosphate synthase (239 aa).

Residue asparagine 7 coordinates 3-amino-2-oxopropyl phosphate. 1-deoxy-D-xylulose 5-phosphate is bound at residue 9–10; it reads DH. Residue arginine 18 coordinates 3-amino-2-oxopropyl phosphate. The active-site Proton acceptor is histidine 43. The 1-deoxy-D-xylulose 5-phosphate site is built by arginine 45 and histidine 50. Catalysis depends on glutamate 70, which acts as the Proton acceptor. Residue threonine 100 participates in 1-deoxy-D-xylulose 5-phosphate binding. Histidine 192 serves as the catalytic Proton donor. 3-amino-2-oxopropyl phosphate-binding positions include glycine 193 and 214 to 215; that span reads GH.

It belongs to the PNP synthase family. As to quaternary structure, homooctamer; tetramer of dimers.

The protein resides in the cytoplasm. It carries out the reaction 3-amino-2-oxopropyl phosphate + 1-deoxy-D-xylulose 5-phosphate = pyridoxine 5'-phosphate + phosphate + 2 H2O + H(+). It participates in cofactor biosynthesis; pyridoxine 5'-phosphate biosynthesis; pyridoxine 5'-phosphate from D-erythrose 4-phosphate: step 5/5. Catalyzes the complicated ring closure reaction between the two acyclic compounds 1-deoxy-D-xylulose-5-phosphate (DXP) and 3-amino-2-oxopropyl phosphate (1-amino-acetone-3-phosphate or AAP) to form pyridoxine 5'-phosphate (PNP) and inorganic phosphate. In Pelagibacter ubique (strain HTCC1062), this protein is Pyridoxine 5'-phosphate synthase.